Consider the following 238-residue polypeptide: Androgen-induced gene 1 protein (238 aa).

Residues 1–12 are Cytoplasmic-facing; that stretch reads MALVPCQVLRMA. The helical transmembrane segment at 13 to 30 threads the bilayer; it reads ILLSYCSILCNYKAIEMP. The Extracellular portion of the chain corresponds to 31–44; the sequence is SHQTYGGSWKFLTF. The helical transmembrane segment at 45 to 67 threads the bilayer; that stretch reads IDLVIQAVFFGICVLTDLSSLLT. At 68 to 87 the chain is on the cytoplasmic side; sequence RGSGNQEQERQLKKLISLRD. The chain crosses the membrane as a helical span at residues 88 to 110; the sequence is WMLAVLAFPVGVFVVAVFWIIYA. The Extracellular segment spans residues 111–124; sequence YDREMIYPKLLDNF. Residues 125–144 form a helical membrane-spanning segment; sequence IPGWLNHGMHTTVLPFILIE. Residues 145–156 lie on the Cytoplasmic side of the membrane; it reads MRTSHHQYPSRS. The helical transmembrane segment at 157–179 threads the bilayer; that stretch reads SGLTAICTFSVGYILWVCWVHHV. Topologically, residues 180–193 are extracellular; sequence TGMWVYPFLEHIGP. A helical membrane pass occupies residues 194–216; that stretch reads GARIIFFGSTTILMNFLYLLGEV. Over 217-238 the chain is Cytoplasmic; it reads LNNYIWDTQKSMEEEKEKPKLE.

It belongs to the AIG1 family. In terms of tissue distribution, highly expressed in heart, ovary, testis, liver, and kidney, at lower levels in spleen, prostate, brain, skeletal muscle, pancreas, small intestine and colon, and undetected in peripheral blood leukocytes, thymus, lung and placenta. AIG1 expression is higher in hair follicles from males than from females.

It localises to the cell membrane. The enzyme catalyses 9-hexadecanoyloxy-octadecanoate + H2O = 9-hydroxy-octadecanoate + hexadecanoate + H(+). It catalyses the reaction 12-hexadecanoyloxy-octadecanoate + H2O = 12-hydroxyoctadecanoate + hexadecanoate + H(+). It carries out the reaction 9-(9Z-hexadecenoyloxy)-octadecanoate + H2O = (9Z)-hexadecenoate + 9-hydroxy-octadecanoate + H(+). The catalysed reaction is 12-(9Z-hexadecenoyloxy)-octadecanoate + H2O = 12-hydroxyoctadecanoate + (9Z)-hexadecenoate + H(+). The enzyme catalyses 13-(9Z-hexadecenoyloxy)-octadecanoate + H2O = 13-hydroxy-octadecanoate + (9Z)-hexadecenoate + H(+). It catalyses the reaction 9-octadecanoyloxy-octadecanoate + H2O = 9-hydroxy-octadecanoate + octadecanoate + H(+). It carries out the reaction 12-octadecanoyloxy-octadecanoate + H2O = 12-hydroxyoctadecanoate + octadecanoate + H(+). The catalysed reaction is 13-octadecanoyloxy-octadecanoate + H2O = 13-hydroxy-octadecanoate + octadecanoate + H(+). The enzyme catalyses 9-(9Z-octadecenoyloxy)-octadecanoate + H2O = 9-hydroxy-octadecanoate + (9Z)-octadecenoate + H(+). It catalyses the reaction 12-(9Z-octadecenoyloxy)-octadecanoate + H2O = 12-hydroxyoctadecanoate + (9Z)-octadecenoate + H(+). It carries out the reaction 13-(9Z-octadecenoyloxy)-octadecanoate + H2O = 13-hydroxy-octadecanoate + (9Z)-octadecenoate + H(+). The catalysed reaction is 5-(9Z-hexadecenoyloxy)-octadecanoate + H2O = 5-hydroxy-octadecanoate + (9Z)-hexadecenoate + H(+). Its activity is regulated as follows. Inhibited by N-hydroxyhydantoin carbamate JJH260 and beta-lactone KC01. In terms of biological role, hydrolyzes bioactive fatty-acid esters of hydroxy-fatty acids (FAHFAs), but not other major classes of lipids. Show a preference for FAHFAs with branching distal from the carboxylate head group of the lipids. The chain is Androgen-induced gene 1 protein (AIG1) from Homo sapiens (Human).